A 52-amino-acid chain; its full sequence is Venom peptide 4b (52 aa).

The first 23 residues, 1 to 23 (MRSAILLVIVAIVAILGFLGVNA), serve as a signal peptide directing secretion. AXPX repeat units follow at residues 23 to 26 (AEPL), 31 to 34 (AEPN), and 39 to 42 (AAPL). The propeptide occupies 24-41 (EPLPSPLAEPNPHAKAAP). Positions 30–52 (LAEPNPHAKAAPLSPAAMASLAG) are disordered. Residues 37 to 52 (AKAAPLSPAAMASLAG) show a composition bias toward low complexity. A51 is modified (alanine amide).

In terms of tissue distribution, expressed by the venom gland.

The protein resides in the secreted. The chain is Venom peptide 4b from Eumenes pomiformis (Potter wasp).